Consider the following 113-residue polypeptide: Large ribosomal subunit protein uL24 (113 aa).

The protein belongs to the universal ribosomal protein uL24 family. As to quaternary structure, part of the 50S ribosomal subunit.

One of two assembly initiator proteins, it binds directly to the 5'-end of the 23S rRNA, where it nucleates assembly of the 50S subunit. Functionally, one of the proteins that surrounds the polypeptide exit tunnel on the outside of the subunit. The sequence is that of Large ribosomal subunit protein uL24 from Micrococcus luteus (strain ATCC 4698 / DSM 20030 / JCM 1464 / CCM 169 / CCUG 5858 / IAM 1056 / NBRC 3333 / NCIMB 9278 / NCTC 2665 / VKM Ac-2230) (Micrococcus lysodeikticus).